A 440-amino-acid chain; its full sequence is Transposon Ty1-GR2 Gag polyprotein (440 aa).

A compositionally biased stretch (low complexity) spans 1-16; the sequence is MESQQLSQHSHISHGS. 3 disordered regions span residues 1–93, 126–173, and 352–440; these read MESQ…MMTQ, PQSQ…RPPP, and GSRN…PGTY. 2 stretches are compositionally biased toward polar residues: residues 48 to 60 and 127 to 152; these read TKAN…TPAS and QSQF…GNTF. Residues 153-165 show a composition bias toward low complexity; that stretch reads TDSSSADSDMTST. An RNA-binding region spans residues 299–401; that stretch reads NNGIHINNKV…NSKSKTARAH (103 aa). The span at 402–418 shows a compositional bias: low complexity; it reads NVSTSNNSPSTDNDSIS. At S416 the chain carries Phosphoserine. Polar residues predominate over residues 419 to 428; sequence KSTTEPIQLN. Over residues 429–440 the composition is skewed to basic and acidic residues; it reads NKHDLHLRPGTY.

In terms of assembly, homotrimer.

The protein localises to the cytoplasm. Its function is as follows. Capsid protein (CA) is the structural component of the virus-like particle (VLP), forming the shell that encapsulates the retrotransposons dimeric RNA genome. The particles are assembled from trimer-clustered units and there are holes in the capsid shells that allow for the diffusion of macromolecules. CA also has nucleocapsid-like chaperone activity, promoting primer tRNA(i)-Met annealing to the multipartite primer-binding site (PBS), dimerization of Ty1 RNA and initiation of reverse transcription. The polypeptide is Transposon Ty1-GR2 Gag polyprotein (TY1A-GR2) (Saccharomyces cerevisiae (strain ATCC 204508 / S288c) (Baker's yeast)).